The following is a 431-amino-acid chain: Serine--tRNA ligase (431 aa).

Residue 237-239 (TAE) coordinates L-serine. 268-270 (RSE) is an ATP binding site. Residue Glu291 participates in L-serine binding. 355 to 358 (EISS) is an ATP binding site. Ser390 serves as a coordination point for L-serine.

Belongs to the class-II aminoacyl-tRNA synthetase family. Type-1 seryl-tRNA synthetase subfamily. Homodimer. The tRNA molecule binds across the dimer.

The protein resides in the cytoplasm. The enzyme catalyses tRNA(Ser) + L-serine + ATP = L-seryl-tRNA(Ser) + AMP + diphosphate + H(+). The catalysed reaction is tRNA(Sec) + L-serine + ATP = L-seryl-tRNA(Sec) + AMP + diphosphate + H(+). It participates in aminoacyl-tRNA biosynthesis; selenocysteinyl-tRNA(Sec) biosynthesis; L-seryl-tRNA(Sec) from L-serine and tRNA(Sec): step 1/1. In terms of biological role, catalyzes the attachment of serine to tRNA(Ser). Is also able to aminoacylate tRNA(Sec) with serine, to form the misacylated tRNA L-seryl-tRNA(Sec), which will be further converted into selenocysteinyl-tRNA(Sec). The chain is Serine--tRNA ligase from Neisseria meningitidis serogroup A / serotype 4A (strain DSM 15465 / Z2491).